Reading from the N-terminus, the 1133-residue chain is Sterol regulatory element-binding protein 1 (1133 aa).

Residues 1-60 (MDELPFGEAAVEQALDELGELDAALLTDIQDMLQLINNQDSDFPGLFDSPYAGGGAGDTE) are transcriptional activation (acidic). Residues 1-476 (MDELPFGEAA…HSHGMLDRSR (476 aa)) are Cytoplasmic-facing. The 9aaTAD motif lies at 27–35 (TDIQDMLQL). Residues 46-78 (LFDSPYAGGGAGDTEPTSPGANSPESLSSPASL) form a disordered region. A compositionally biased stretch (low complexity) spans 68 to 78 (SPESLSSPASL). Residues serine 97 and serine 116 each carry the phosphoserine modification. The tract at residues 131–219 (LQPPAAQPSP…PLPASTAPRT (89 aa)) is disordered. A compositionally biased stretch (polar residues) spans 165–180 (SLPSGFSGTLPGNTQQ). Low complexity-rich tracts occupy residues 181-191 (PPSSLSLASAP) and 203-217 (QSSA…STAP). The tract at residues 227–486 (QRVPVVLQPH…LALCALVFLC (260 aa)) is interaction with LMNA. The 51-residue stretch at 317-367 (EKRTAHNAIEKRYRSSINDKIVELKDLVVGTEAKLNKSAVLRKAIDYIRFL) folds into the bHLH domain. Phosphoserine; by SIK1 is present on residues serine 331 and serine 332. The tract at residues 367-388 (LQHSNQKLKQENLALRNAAHKS) is leucine-zipper. Serine 390 is modified (phosphoserine; by AMPK). Position 396 is a phosphoserine; by SIK1 (serine 396). The tract at residues 415-456 (VVDTLTPPPSDAGSPSQSSPLSLGSRGSSSGGSDSEPDSPVF) is disordered. The span at 425-454 (DAGSPSQSSPLSLGSRGSSSGGSDSEPDSP) shows a compositional bias: low complexity. Phosphoserine is present on serine 449. The chain crosses the membrane as a helical span at residues 477-497 (LALCALVFLCLTCNPLASLFG). The Lumenal segment spans residues 498–535 (WGIPGPSSASGAHHSSGRSMLEAESRDGSNWTQWLLPP). A helical transmembrane segment spans residues 536–556 (LVWLANGLLVLACLALLFVYG). At 557-1133 (EPVTRPHTSP…LGGGTTVTSS (577 aa)) the chain is on the cytoplasmic side. Serine 1046 is subject to Phosphoserine.

Belongs to the SREBP family. In terms of assembly, efficient DNA binding of the soluble transcription factor fragment requires dimerization with another bHLH protein. Interacts with CEBPA, the interaction produces a transcriptional synergy. Interacts with LMNA. As to quaternary structure, forms a tight complex with SCAP, the SCAP-SREBP complex, in the endoplasmic reticulum membrane and the Golgi apparatus. Interacts with PAQR3; the interaction anchors the SCAP-SREBP complex to the Golgi apparatus in low cholesterol conditions. In terms of processing, processed in the Golgi apparatus, releasing the protein from the membrane. At low cholesterol the SCAP-SREBP complex is recruited into COPII vesicles for export from the endoplasmic reticulum. In the Golgi, complex SREBPs are cleaved sequentially by site-1 (MBTPS1, S1P) and site-2 (MBTPS2, S2P) proteases. The first cleavage by site-1 protease occurs within the luminal loop, the second cleavage by site-2 protease occurs within the first transmembrane domain, releasing the transcription factor from the Golgi membrane. Phosphorylated by AMPK, leading to suppress protein processing and nuclear translocation, and repress target gene expression. Phosphorylation at Ser-396 by SIK1 represses activity possibly by inhibiting DNA-binding. Post-translationally, SCAP-free SREBF1 is ubiquitinated by the BCR(ARMC5) complex, leading to its degradation. In terms of processing, ubiquitinated; the nuclear form has a rapid turnover and is rapidly ubiquitinated and degraded by the proteasome in the nucleus.

It localises to the endoplasmic reticulum membrane. It is found in the golgi apparatus membrane. The protein resides in the cytoplasmic vesicle. Its subcellular location is the COPII-coated vesicle membrane. The protein localises to the nucleus. Its activity is regulated as follows. Activation by cleavage is down-regulated upon activation of SIRT3-dependent PRKAA1/AMPK-alpha signaling cascade which leads to inhibition of ATP-consuming lipogenesis to restore cellular energy balance. In terms of biological role, precursor of the transcription factor form (Processed sterol regulatory element-binding protein 1), which is embedded in the endoplasmic reticulum membrane. Low sterol concentrations promote processing of this form, releasing the transcription factor form that translocates into the nucleus and activates transcription of genes involved in cholesterol biosynthesis and lipid homeostasis. Functionally, key transcription factor that regulates expression of genes involved in cholesterol biosynthesis and lipid homeostasis. Binds to the sterol regulatory element 1 (SRE-1) (5'-ATCACCCCAC-3'). Has dual sequence specificity binding to both an E-box motif (5'-ATCACGTGA-3') and to SRE-1 (5'-ATCACCCCAC-3'). Regulates the promoters of genes involved in cholesterol biosynthesis and the LDL receptor (LDLR) pathway of sterol regulation. In Cricetulus griseus (Chinese hamster), this protein is Sterol regulatory element-binding protein 1.